The following is a 328-amino-acid chain: MIFSILEHILTHISFSVVSIVMTIYFLTLLVNLDESIGFYYSSDKGIIITFFSITGFLFTRWIFSGHFPLSNLYESLIFLSWAFSIIHMISFFNKKRKKNLNAITAPSAIFIQGFATSGLLNKMPQSAILVPALQSQWLMMHVSMMVLGYGALLCGSLLSIALLVITFRKVGPFFYKKNINRKKFLTEFFSFDVLYYINERNSILLKQNINLSFSRNYYRYQLIEQLDYWSYRIISLGFLFLTIGILSGAVWANETWGSYWNWDPKETWAFITWTIFAIYLHIKTKQNGRGINSAIVASIGFLVIWICYFGVNLLGIGLHSYGSFTSN.

8 helical membrane-spanning segments follow: residues 13 to 33 (ISFS…LVNL), 46 to 66 (GIII…IFSG), 73 to 93 (LYES…ISFF), 101 to 121 (LNAI…SGLL), 146 to 166 (MVLG…LLVI), 234 to 254 (IISL…VWAN), 263 to 283 (WDPK…YLHI), and 295 to 315 (AIVA…VNLL).

Belongs to the CcmF/CycK/Ccl1/NrfE/CcsA family. In terms of assembly, may interact with Ccs1.

It localises to the plastid. The protein localises to the chloroplast thylakoid membrane. Functionally, required during biogenesis of c-type cytochromes (cytochrome c6 and cytochrome f) at the step of heme attachment. This is Cytochrome c biogenesis protein CcsA from Aethionema grandiflorum (Persian stone-cress).